Consider the following 302-residue polypeptide: MPSPAVDLLKQKTASLPNAPISVVAANTFVPPTQPVTAGNQLPTSVPLPVLPAVEAAKRLAAYAAVDRHIAHEHKVIGIGSGSTVPYVVDRILAQGFEANKDRVFLPTGFQSKELIVKAGLTLGDVDQYARIDVTIDGADEVDNELNSIKGGGACQLREKVLAEAADTWIIVADYRKNSEVLGTSWTKGIPIEVVPFAYAKVLTNLAHMGSPHVLPNGQPGLSLRMGKMKAGPVVSDNGNFIIDAPFAEELMRQPEELLHKIKMLTGVVEVGLFCGMAKAAYFGNEDGSVTIRSDDGTISQL.

This sequence belongs to the ribose 5-phosphate isomerase family.

It is found in the cytoplasm. The catalysed reaction is aldehydo-D-ribose 5-phosphate = D-ribulose 5-phosphate. It participates in carbohydrate degradation; pentose phosphate pathway; D-ribose 5-phosphate from D-ribulose 5-phosphate (non-oxidative stage): step 1/1. This chain is Ribose-5-phosphate isomerase (RKI1), found in Cryptococcus neoformans var. neoformans serotype D (strain B-3501A) (Filobasidiella neoformans).